We begin with the raw amino-acid sequence, 181 residues long: Major urinary protein 20 (181 aa).

The signal sequence occupies residues 1-19 (MKLLVLLLCLGLTLVCVHA). C83 and C176 form a disulfide bridge.

Belongs to the calycin superfamily. Lipocalin family. As to expression, detected in urine of males but absent from female urine (at protein level).

Its subcellular location is the secreted. Its function is as follows. Male pheromone which stimulates female sexual attraction to male urinary scent and promotes a strong learned attraction to the airborne urinary odor of an individual male. Promotes spatial learning by rapidly conditioning preference for its remembered location among females and competitor males so that animals prefer to spend time in the site even when scent is absent. In addition to promoting a rapid attraction response, also elicits ultrasonic vocalizations and urinary scent marking in females which do not occur immediately after exposure. Stimulates hippocampal neurogenesis and cell proliferation in the subventricular zone in females. Promotes male aggressive behavior. Response to Mup20 is mediated by a neural circuit extending from the accessory olfactory bulb to a subset of nitric oxidase synthase-expressing neurons in the medial amygdala. As well as acting as a pheromone itself, binds most of the male pheromone, 2-sec-butyl-4,5-dihydrothiazole, in urine and is responsible for its slow release from scent marks. The polypeptide is Major urinary protein 20 (Mus musculus (Mouse)).